Consider the following 449-residue polypeptide: Histone PARylation factor 1-like (449 aa).

Residues 3 to 28 (KEDCKYWDKCYQQNPAHLSKYNHPKK) form a CCHC-type zinc finger. The disordered stretch occupies residues 18-93 (AHLSKYNHPK…AKGSYEAETE (76 aa)). Composition is skewed to basic and acidic residues over residues 28–41 (KQQE…EGKK) and 54–69 (EQKK…KDKS). The residue at position 72 (S72) is a Phosphoserine. E384 (proton donor) is an active-site residue.

The protein belongs to the HPF1 family.

It localises to the chromosome. Its subcellular location is the nucleus. Cofactor for serine ADP-ribosylation that confers serine specificity on Parp. Switches the amino acid specificity of Parp from aspartate or glutamate to serine residues. Acts by completing the active site of Parp: forms a composite active site composed of residues from HPF1/CG1218 and Parp. In Drosophila melanogaster (Fruit fly), this protein is Histone PARylation factor 1-like.